The primary structure comprises 239 residues: Sugar fermentation stimulation protein homolog (239 aa).

Belongs to the SfsA family.

The sequence is that of Sugar fermentation stimulation protein homolog from Methylobacterium sp. (strain 4-46).